A 457-amino-acid chain; its full sequence is Vasoactive intestinal polypeptide receptor 1 (457 aa).

The first 30 residues, 1–30 (MRPPSPLPARWLCVLAGALAWALGPAGGQA), serve as a signal peptide directing secretion. Over 31–141 (ARLQEECDYV…DEQQTMFYGS (111 aa)) the chain is Extracellular. Disulfide bonds link Cys-37–Cys-208, Cys-50–Cys-72, Cys-63–Cys-105, Cys-86–Cys-122, and Cys-215–Cys-285. Asn-58, Asn-69, and Asn-100 each carry an N-linked (GlcNAc...) asparagine glycan. A helical membrane pass occupies residues 142 to 166 (VKTGYTIGYGLSLATLLVATAILSL). The Cytoplasmic portion of the chain corresponds to 167–174 (FRKLHCTR). The chain crosses the membrane as a helical span at residues 175–196 (NYIHMHLFISFILRAAAVFIKD). At 197-216 (LALFDSGESDQCSEGSVGCK) the chain is on the extracellular side. A helical membrane pass occupies residues 217-241 (AAMVFFQYCVMANFFWLLVEGLYLY). Topologically, residues 242-254 (TLLAVSFFSERKY) are cytoplasmic. Residues 255-276 (FWGYILIGWGVPSTFTMVWTIA) traverse the membrane as a helical segment. At 277–291 (RIHFEDYGCWDTINS) the chain is on the extracellular side. N-linked (GlcNAc...) asparagine glycosylation occurs at Asn-290. Residues 292–316 (SLWWIIKGPILTSILVNFILFICII) form a helical membrane-spanning segment. Topologically, residues 317 to 338 (RILLQKLRPPDIRKSDSSPYSR) are cytoplasmic. Residues 339 to 359 (LARSTLLLIPLFGVHYIMFAF) form a helical membrane-spanning segment. Residues 360-367 (FPDNFKPE) are Extracellular-facing. The helical transmembrane segment at 368-391 (VKMVFELVVGSFQGFVVAILYCFL) threads the bilayer. Residues 392–457 (NGEVQAELRR…SSFQAEVSLV (66 aa)) lie on the Cytoplasmic side of the membrane.

It belongs to the G-protein coupled receptor 2 family. As to quaternary structure, interacts with ADCYAP1/PACAP; activated by both PACAP27 and PACAP38 neuropeptides. Interacts with VIP; the interaction results in VIPR1 activation. In terms of tissue distribution, in lung, HT-29 colonic epithelial cells, Raji B-lymphoblasts. Lesser extent in brain, heart, kidney, liver and placenta. Not expressed in CD4+ or CD8+ T-cells. Expressed in the T-cell lines HARRIS, HuT 78, Jurkat and SUP-T1, but not in the T-cell lines Peer, MOLT-4, HSB and YT.

It localises to the cell membrane. In terms of biological role, g protein-coupled receptor activated by the neuropeptides vasoactive intestinal peptide (VIP) and pituitary adenylate cyclase-activating polypeptide (ADCYAP1/PACAP). Binds VIP and both PACAP27 and PACAP38 bioactive peptides with the following order of ligand affinity VIP = PACAP27 &gt; PACAP38. Ligand binding causes a conformation change that triggers signaling via guanine nucleotide-binding proteins (G proteins) and modulates the activity of downstream effectors. Activates cAMP-dependent pathway. This Homo sapiens (Human) protein is Vasoactive intestinal polypeptide receptor 1.